The chain runs to 931 residues: Probable zinc protease PqqL (931 aa).

His80 is a Zn(2+) binding site. The Proton acceptor role is filled by Glu83. 2 residues coordinate Zn(2+): His84 and Glu160.

This sequence belongs to the peptidase M16 family. The cofactor is Zn(2+).

This Escherichia coli (strain K12) protein is Probable zinc protease PqqL (pqqL).